We begin with the raw amino-acid sequence, 695 residues long: Elongation factor G (695 aa).

The tr-type G domain maps to 8–282 (KDTRNIGIMA…AIVDYMPAPI (275 aa)). GTP is bound by residues 17–24 (AHIDAGKT), 81–85 (DTPGH), and 135–138 (NKMD). The segment at 285–304 (PDIKGVDPQTDEPTTRKSSD) is disordered.

The protein belongs to the TRAFAC class translation factor GTPase superfamily. Classic translation factor GTPase family. EF-G/EF-2 subfamily.

Its subcellular location is the cytoplasm. Catalyzes the GTP-dependent ribosomal translocation step during translation elongation. During this step, the ribosome changes from the pre-translocational (PRE) to the post-translocational (POST) state as the newly formed A-site-bound peptidyl-tRNA and P-site-bound deacylated tRNA move to the P and E sites, respectively. Catalyzes the coordinated movement of the two tRNA molecules, the mRNA and conformational changes in the ribosome. In Finegoldia magna (strain ATCC 29328 / DSM 20472 / WAL 2508) (Peptostreptococcus magnus), this protein is Elongation factor G.